The primary structure comprises 265 residues: Undecaprenyl-diphosphatase 1 (265 aa).

Helical transmembrane passes span 4 to 24, 42 to 62, 84 to 104, 108 to 128, 184 to 204, 217 to 237, and 245 to 265; these read IITAFILGIVEGLAEFLPISS, AKTFEIVIQLGAILAIAILYH, FHVFLGVFPAVVAGLLLHDII, LFQPYTVVIGLVAGAILMIFA, SEFSFLIALPVMVGATGLDLL, MFAVGFITSFIVAMLAVVTFL, and LKPFAYYRILLAILFTVFVLL.

Belongs to the UppP family.

It localises to the cell membrane. The enzyme catalyses di-trans,octa-cis-undecaprenyl diphosphate + H2O = di-trans,octa-cis-undecaprenyl phosphate + phosphate + H(+). Its function is as follows. Catalyzes the dephosphorylation of undecaprenyl diphosphate (UPP). Confers resistance to bacitracin. The sequence is that of Undecaprenyl-diphosphatase 1 from Bacillus thuringiensis subsp. konkukian (strain 97-27).